The following is a 211-amino-acid chain: Large ribosomal subunit protein uL4 (211 aa).

The disordered stretch occupies residues 44 to 90 (ERQGTHSTLTKGEVRGGGKKPWRQKHTGKARTGSTRNPHWTGGGVVF). Basic residues predominate over residues 60–72 (GGKKPWRQKHTGK).

The protein belongs to the universal ribosomal protein uL4 family. As to quaternary structure, part of the 50S ribosomal subunit.

One of the primary rRNA binding proteins, this protein initially binds near the 5'-end of the 23S rRNA. It is important during the early stages of 50S assembly. It makes multiple contacts with different domains of the 23S rRNA in the assembled 50S subunit and ribosome. Its function is as follows. Forms part of the polypeptide exit tunnel. The chain is Large ribosomal subunit protein uL4 from Ureaplasma parvum serovar 3 (strain ATCC 27815 / 27 / NCTC 11736).